The primary structure comprises 483 residues: Glutamyl-tRNA(Gln) amidotransferase subunit A (483 aa).

Active-site charge relay system residues include Lys76 and Ser151. Catalysis depends on Ser175, which acts as the Acyl-ester intermediate.

This sequence belongs to the amidase family. GatA subfamily. In terms of assembly, heterotrimer of A, B and C subunits.

It carries out the reaction L-glutamyl-tRNA(Gln) + L-glutamine + ATP + H2O = L-glutaminyl-tRNA(Gln) + L-glutamate + ADP + phosphate + H(+). Functionally, allows the formation of correctly charged Gln-tRNA(Gln) through the transamidation of misacylated Glu-tRNA(Gln) in organisms which lack glutaminyl-tRNA synthetase. The reaction takes place in the presence of glutamine and ATP through an activated gamma-phospho-Glu-tRNA(Gln). In Pseudomonas syringae pv. tomato (strain ATCC BAA-871 / DC3000), this protein is Glutamyl-tRNA(Gln) amidotransferase subunit A.